The chain runs to 396 residues: Tryptophan synthase beta chain (396 aa).

Position 86 is an N6-(pyridoxal phosphate)lysine (Lys86).

Belongs to the TrpB family. Tetramer of two alpha and two beta chains. The cofactor is pyridoxal 5'-phosphate.

The enzyme catalyses (1S,2R)-1-C-(indol-3-yl)glycerol 3-phosphate + L-serine = D-glyceraldehyde 3-phosphate + L-tryptophan + H2O. The protein operates within amino-acid biosynthesis; L-tryptophan biosynthesis; L-tryptophan from chorismate: step 5/5. Its function is as follows. The beta subunit is responsible for the synthesis of L-tryptophan from indole and L-serine. The polypeptide is Tryptophan synthase beta chain (Francisella tularensis subsp. tularensis (strain FSC 198)).